The following is a 134-amino-acid chain: Large ribosomal subunit protein uL14 (134 aa).

This sequence belongs to the universal ribosomal protein uL14 family. Part of the 50S ribosomal subunit. Forms a cluster with proteins L3 and L19. In the 70S ribosome, L14 and L19 interact and together make contacts with the 16S rRNA in bridges B5 and B8.

Its function is as follows. Binds to 23S rRNA. Forms part of two intersubunit bridges in the 70S ribosome. The protein is Large ribosomal subunit protein uL14 of Deinococcus deserti (strain DSM 17065 / CIP 109153 / LMG 22923 / VCD115).